The sequence spans 86 residues: Small ribosomal subunit protein uS15c (86 aa).

This sequence belongs to the universal ribosomal protein uS15 family. Part of the 30S ribosomal subunit.

Its subcellular location is the plastid. It localises to the chloroplast. This is Small ribosomal subunit protein uS15c (rps15) from Cryptomeria japonica (Japanese cedar).